A 63-amino-acid polypeptide reads, in one-letter code: Large ribosomal subunit protein eL24 (63 aa).

Residues Cys7, Cys10, Cys33, and Cys37 each contribute to the Zn(2+) site. A C4-type zinc finger spans residues 7–37; the sequence is CSFCGGSIEPGTGLMYVLRNGQILWFCSSKC.

This sequence belongs to the eukaryotic ribosomal protein eL24 family. In terms of assembly, part of the 50S ribosomal subunit. Forms a cluster with proteins L3 and L14. It depends on Zn(2+) as a cofactor.

In terms of biological role, binds to the 23S rRNA. The protein is Large ribosomal subunit protein eL24 of Aeropyrum pernix (strain ATCC 700893 / DSM 11879 / JCM 9820 / NBRC 100138 / K1).